A 225-amino-acid chain; its full sequence is Late gene expression regulator BDLF4 (225 aa).

Positions 1–20 (MSDQGRLSLPRGEGGTDEPN) are disordered.

This sequence belongs to the herpesviridae UL92 family.

Functionally, part of the viral pre-initiation complex (vPIC) that is responsible for the expression of vPIC-dependent late genes. vPIC is composed of at least BcRF1 that binds the viral TATT box, BDLF3.5, BDLF4, BFRF2, BGLF3, BGLF4 and BVLF1. In Homo sapiens (Human), this protein is Late gene expression regulator BDLF4.